Consider the following 187-residue polypeptide: Small ribosomal subunit protein uS7 (187 aa).

This sequence belongs to the universal ribosomal protein uS7 family. Part of the 30S ribosomal subunit.

Its function is as follows. One of the primary rRNA binding proteins, it binds directly to 16S rRNA where it nucleates assembly of the head domain of the 30S subunit. Is located at the subunit interface close to the decoding center. In Methanosphaera stadtmanae (strain ATCC 43021 / DSM 3091 / JCM 11832 / MCB-3), this protein is Small ribosomal subunit protein uS7.